We begin with the raw amino-acid sequence, 434 residues long: Putative nuclease OPG089 (434 aa).

The protein belongs to the XPG/RAD2 endonuclease family. FEN1 subfamily. It depends on Mg(2+) as a cofactor.

The protein localises to the virion. Putative nuclease that seems to be required for double-strand break repair, homologous recombination, and production of full-length viral genomic DNA. The protein is Putative nuclease OPG089 (OPG089) of Monkeypox virus.